The primary structure comprises 879 residues: Alanine--tRNA ligase (879 aa).

Zn(2+) is bound by residues His-570, His-574, Cys-672, and His-676.

This sequence belongs to the class-II aminoacyl-tRNA synthetase family. The cofactor is Zn(2+).

It localises to the cytoplasm. The enzyme catalyses tRNA(Ala) + L-alanine + ATP = L-alanyl-tRNA(Ala) + AMP + diphosphate. Catalyzes the attachment of alanine to tRNA(Ala) in a two-step reaction: alanine is first activated by ATP to form Ala-AMP and then transferred to the acceptor end of tRNA(Ala). Also edits incorrectly charged Ser-tRNA(Ala) and Gly-tRNA(Ala) via its editing domain. This Nitratidesulfovibrio vulgaris (strain ATCC 29579 / DSM 644 / CCUG 34227 / NCIMB 8303 / VKM B-1760 / Hildenborough) (Desulfovibrio vulgaris) protein is Alanine--tRNA ligase.